The following is a 153-amino-acid chain: Ribosomal RNA large subunit methyltransferase H (153 aa).

S-adenosyl-L-methionine is bound by residues Leu70, Gly102, and 121 to 126 (LSSMTF).

Belongs to the RNA methyltransferase RlmH family. As to quaternary structure, homodimer.

Its subcellular location is the cytoplasm. It carries out the reaction pseudouridine(1915) in 23S rRNA + S-adenosyl-L-methionine = N(3)-methylpseudouridine(1915) in 23S rRNA + S-adenosyl-L-homocysteine + H(+). Functionally, specifically methylates the pseudouridine at position 1915 (m3Psi1915) in 23S rRNA. The polypeptide is Ribosomal RNA large subunit methyltransferase H (Dictyoglomus thermophilum (strain ATCC 35947 / DSM 3960 / H-6-12)).